The chain runs to 521 residues: Importin subunit alpha-3 (521 aa).

Position 2 is an N-acetylalanine (A2). The region spanning 2-58 is the IBB domain; the sequence is ADNEKLDNQRLKNFKNKGRDLETMRRQRNEVVVELRKNKRDEHLLKRRNVPQEDICE. Positions 43-52 match the Nuclear localization signal motif; that stretch reads EHLLKRRNVP. S60 bears the Phosphoserine mark. The stretch at 66 to 106 is one ARM 1; truncated repeat; the sequence is YRVQNTSLEAIVQNASSDNQGIQLSAVQAARKLLSSDRNPP. 8 ARM repeats span residues 107–149, 150–194, 195–233, 234–278, 279–318, 319–360, 361–400, and 401–443; these read IDDL…TSEQ, TQAV…CRDY, VISLGVVKPLLSFISPSIPITFLRNVTWVMVNLCRHKDP, PPPM…EQIQ, MVIDSGIVPHLVPLLSHQEVKVQTAALRAVGNIVTGTDEQ, TQVV…NQQQ, VQAVIDANLVPMIIHLLDKGDFGTQKEAAWAISNLTISGR, and KDQV…KMAE. The interval 137–229 is NLS binding site (major); sequence WALTNIASGT…VTWVMVNLCR (93 aa). Positions 306–394 are NLS binding site (minor); it reads RAVGNIVTGT…QKEAAWAISN (89 aa). Residues 447–485 form an ARM 10; atypical repeat; the sequence is ETIANLIEECGGLEKIEQLQNHENEDIYKLAYEIIDQFF.

This sequence belongs to the importin alpha family. Forms a complex with importin subunit beta-1 (KPNB1). Interacts with SNAI1. Interacts with TALDO1 isoform 1. Interacts with CYB1. In terms of tissue distribution, detected more or less in all tissues examined (Ehrlich ascites tumor cells, testis, kidney, spleen, liver, heart, lung, thymus, skeletal muscle, cerebellum and brain (without cerebellum)). Multiple-sized transcripts were highly expressed, especially in testis.

The protein localises to the cytoplasm. It localises to the nucleus. In terms of biological role, functions in nuclear protein import as an adapter protein for nuclear receptor KPNB1. Binds specifically and directly to substrates containing either a simple or bipartite NLS motif. Docking of the importin/substrate complex to the nuclear pore complex (NPC) is mediated by KPNB1 through binding to nucleoporin FxFG repeats and the complex is subsequently translocated through the pore by an energy requiring, Ran-dependent mechanism. At the nucleoplasmic side of the NPC, Ran binds to importin-beta and the three components separate and importin-alpha and -beta are re-exported from the nucleus to the cytoplasm where GTP hydrolysis releases Ran from importin. The directionality of nuclear import is thought to be conferred by an asymmetric distribution of the GTP- and GDP-bound forms of Ran between the cytoplasm and nucleus. Mediates nuclear import of AARS1, MRTFA and RANBP3. The chain is Importin subunit alpha-3 (Kpna4) from Mus musculus (Mouse).